The primary structure comprises 133 residues: MNKFKLIVTTPERVLISGEVSRVLCKNAVGEFEILAGHQPYLTATVPTVTRIDDENGESKYLFTSTGLMKVQNNEVTFCVNSAEWPEEIDEARAMNAKQRAEERLKNKTDELDEKRAKLALARAMSRLKLKEM.

It belongs to the ATPase epsilon chain family. As to quaternary structure, F-type ATPases have 2 components, CF(1) - the catalytic core - and CF(0) - the membrane proton channel. CF(1) has five subunits: alpha(3), beta(3), gamma(1), delta(1), epsilon(1). CF(0) has three main subunits: a, b and c.

It localises to the cell membrane. Functionally, produces ATP from ADP in the presence of a proton gradient across the membrane. The protein is ATP synthase epsilon chain of Clostridium perfringens (strain ATCC 13124 / DSM 756 / JCM 1290 / NCIMB 6125 / NCTC 8237 / Type A).